The sequence spans 395 residues: ATP synthase subunit a (395 aa).

The next 5 helical transmembrane spans lie at 153 to 173, 246 to 266, 273 to 293, 313 to 333, and 339 to 359; these read FTNPSLFMLLTLSLVLLLVYF, HFLITLGLSFSIFIGITIVGF, FLSFLLPAGVPLPLAPFLVLL, MMAGHSSVKILSGFAWTMLCM, and FIGDLGPLFIVLALTGLELGV.

Belongs to the ATPase A chain family. As to quaternary structure, F-type ATPases have 2 components, CF(1) - the catalytic core - and CF(0) - the membrane proton channel. CF(1) has five subunits: alpha(3), beta(3), gamma(1), delta(1), epsilon(1). CF(0) has three main subunits: a, b and c.

Its subcellular location is the mitochondrion inner membrane. Mitochondrial membrane ATP synthase (F(1)F(0) ATP synthase or Complex V) produces ATP from ADP in the presence of a proton gradient across the membrane which is generated by electron transport complexes of the respiratory chain. F-type ATPases consist of two structural domains, F(1) - containing the extramembraneous catalytic core and F(0) - containing the membrane proton channel, linked together by a central stalk and a peripheral stalk. During catalysis, ATP synthesis in the catalytic domain of F(1) is coupled via a rotary mechanism of the central stalk subunits to proton translocation. Key component of the proton channel; it may play a direct role in the translocation of protons across the membrane. The protein is ATP synthase subunit a (ATP6) of Nicotiana tabacum (Common tobacco).